The chain runs to 380 residues: 1-deoxy-D-xylulose 5-phosphate reductoisomerase (380 aa).

S10, G11, S12, I13, G36, K37, N38, and N120 together coordinate NADPH. K121 is a 1-deoxy-D-xylulose 5-phosphate binding site. E122 is an NADPH binding site. Residue D146 participates in Mn(2+) binding. Residues S147, E148, S172, and H195 each contribute to the 1-deoxy-D-xylulose 5-phosphate site. E148 is a Mn(2+) binding site. G201 is a binding site for NADPH. Positions 208, 213, 214, and 217 each coordinate 1-deoxy-D-xylulose 5-phosphate. E217 lines the Mn(2+) pocket.

This sequence belongs to the DXR family. Mg(2+) serves as cofactor. Mn(2+) is required as a cofactor.

The catalysed reaction is 2-C-methyl-D-erythritol 4-phosphate + NADP(+) = 1-deoxy-D-xylulose 5-phosphate + NADPH + H(+). The protein operates within isoprenoid biosynthesis; isopentenyl diphosphate biosynthesis via DXP pathway; isopentenyl diphosphate from 1-deoxy-D-xylulose 5-phosphate: step 1/6. Its function is as follows. Catalyzes the NADPH-dependent rearrangement and reduction of 1-deoxy-D-xylulose-5-phosphate (DXP) to 2-C-methyl-D-erythritol 4-phosphate (MEP). In Bacillus cereus (strain AH187), this protein is 1-deoxy-D-xylulose 5-phosphate reductoisomerase.